A 349-amino-acid polypeptide reads, in one-letter code: MSDNRAQFLEVFPSLVQELRDILAGYGMPEEAIEWYEKSLNYNTPGGKLNRGLSVVDTYALLKGYKSVSELSAEEYKKVAILGWCIELLQAYFLVADDMMDQSITRRGQPCWYKVENVGDIAINDAFMLEGAIYCLLKKHFRTEPYYVDLLELFHDVTFQTELGQLLDLITAPEDKVDLSKFSLEKHSFIVIFKTAYYSFYLAVALAMFAAGITDSKDLKQASDVLIPLGEYFQIQDDFLDCFGKPEDIGKIGTDIQDNKCSWVINVALKNATKEQRDILDENYGRKDSEKEQKCRAVFNELNIQDIYHKYEEETASNLREKIANIDESRGFKAEVLTLFLNKIYHRKK.

3 residues coordinate isopentenyl diphosphate: K48, R51, and Q90. 2 residues coordinate Mg(2+): D97 and D101. Residue R106 participates in dimethylallyl diphosphate binding. Residue R107 coordinates isopentenyl diphosphate. Dimethylallyl diphosphate is bound by residues K194, T195, Q234, K251, and K260.

It belongs to the FPP/GGPP synthase family. Mg(2+) serves as cofactor.

It localises to the cytoplasm. The enzyme catalyses isopentenyl diphosphate + dimethylallyl diphosphate = (2E)-geranyl diphosphate + diphosphate. The catalysed reaction is isopentenyl diphosphate + (2E)-geranyl diphosphate = (2E,6E)-farnesyl diphosphate + diphosphate. It functions in the pathway isoprenoid biosynthesis; farnesyl diphosphate biosynthesis; farnesyl diphosphate from geranyl diphosphate and isopentenyl diphosphate: step 1/1. Its pathway is isoprenoid biosynthesis; geranyl diphosphate biosynthesis; geranyl diphosphate from dimethylallyl diphosphate and isopentenyl diphosphate: step 1/1. Functionally, catalyzes the sequential condensation of isopentenyl pyrophosphate with the allylic pyrophosphates, dimethylallyl pyrophosphate, and then with the resultant geranylpyrophosphate to the ultimate product farnesyl pyrophosphate. This chain is Farnesyl pyrophosphate synthase (FPS1), found in Kluyveromyces lactis (strain ATCC 8585 / CBS 2359 / DSM 70799 / NBRC 1267 / NRRL Y-1140 / WM37) (Yeast).